A 139-amino-acid polypeptide reads, in one-letter code: MRHKSGGRKLQRTSAHRTAMFRNMSASLIKHEQITTTVAKAKELRPYVEKLVTLAKRGGLANRRLAMSRLMDEAQLAKLFDVLAARYKDRNGGYTRIIKAGIRASDAAPIAIIEFVDRDMGAKGQDSGPVTTDEELEDA.

This sequence belongs to the bacterial ribosomal protein bL17 family. Part of the 50S ribosomal subunit. Contacts protein L32.

This Sphingopyxis alaskensis (strain DSM 13593 / LMG 18877 / RB2256) (Sphingomonas alaskensis) protein is Large ribosomal subunit protein bL17.